We begin with the raw amino-acid sequence, 493 residues long: Cytochrome P450 2E1 (493 aa).

Substrate is bound at residue 298 to 303 (FAGTET). Position 437 (Cys-437) interacts with heme.

It belongs to the cytochrome P450 family. As to quaternary structure, interacts with chaperones HSP70 and HSP90; this interaction is required for initial targeting to mitochondria. It depends on heme as a cofactor.

The protein localises to the endoplasmic reticulum membrane. The protein resides in the microsome membrane. It localises to the mitochondrion inner membrane. It catalyses the reaction an organic molecule + reduced [NADPH--hemoprotein reductase] + O2 = an alcohol + oxidized [NADPH--hemoprotein reductase] + H2O + H(+). The enzyme catalyses (5Z,8Z,11Z)-eicosatrienoate + reduced [NADPH--hemoprotein reductase] + O2 = 19-hydroxy-(5Z,8Z,11Z)-eicosatrienoate + oxidized [NADPH--hemoprotein reductase] + H2O + H(+). The catalysed reaction is (5Z,8Z,11Z,14Z,17Z)-eicosapentaenoate + reduced [NADPH--hemoprotein reductase] + O2 = 19-hydroxy-(5Z,8Z,11Z,14Z,17Z)-eicosapentaenoate + oxidized [NADPH--hemoprotein reductase] + H2O + H(+). It carries out the reaction (4Z,7Z,10Z,13Z,16Z,19Z)-docosahexaenoate + reduced [NADPH--hemoprotein reductase] + O2 = 21-hydroxy-(4Z,7Z,10Z,13Z,16Z,19Z)-docosahexaenoate + oxidized [NADPH--hemoprotein reductase] + H2O + H(+). It catalyses the reaction dodecanoate + reduced [NADPH--hemoprotein reductase] + O2 = 11-hydroxydodecanoate + oxidized [NADPH--hemoprotein reductase] + H2O + H(+). The enzyme catalyses tetradecanoate + reduced [NADPH--hemoprotein reductase] + O2 = 13-hydroxytetradecanoate + oxidized [NADPH--hemoprotein reductase] + H2O + H(+). The catalysed reaction is 4-nitrophenol + NADPH + O2 + H(+) = 4-nitrocatechol + NADP(+) + H2O. It functions in the pathway lipid metabolism; fatty acid metabolism. Its activity is regulated as follows. The omega-1 hydroxylase activity is stimulated by cytochrome b5. A cytochrome P450 monooxygenase involved in the metabolism of fatty acids. Mechanistically, uses molecular oxygen inserting one oxygen atom into a substrate, and reducing the second into a water molecule, with two electrons provided by NADPH via cytochrome P450 reductase (NADPH--hemoprotein reductase). Catalyzes the hydroxylation of carbon-hydrogen bonds. Hydroxylates fatty acids specifically at the omega-1 position displaying the highest catalytic activity for saturated fatty acids. May be involved in the oxidative metabolism of xenobiotics. This chain is Cytochrome P450 2E1, found in Homo sapiens (Human).